The chain runs to 113 residues: Pancreatic progenitor cell differentiation and proliferation factor (113 aa).

Belongs to the PPDPF family.

In terms of biological role, probable regulator of exocrine pancreas development. The chain is Pancreatic progenitor cell differentiation and proliferation factor (ppdpf) from Xenopus tropicalis (Western clawed frog).